The sequence spans 203 residues: Holliday junction branch migration complex subunit RuvA (203 aa).

A domain I region spans residues 1 to 64; sequence MIGRLRGIIL…EDAQLLYGFN (64 aa). Residues 65-142 form a domain II region; it reads NKQERMLFRE…KGLHGDLFTP (78 aa). The flexible linker stretch occupies residues 143 to 154; it reads AADLVLTSPNGP. The interval 155 to 203 is domain III; that stretch reads TSDDAEQEAVAALVALGYKPQEASRMVSKIAKPDANSETLIREALRAAL.

Belongs to the RuvA family. As to quaternary structure, homotetramer. Forms an RuvA(8)-RuvB(12)-Holliday junction (HJ) complex. HJ DNA is sandwiched between 2 RuvA tetramers; dsDNA enters through RuvA and exits via RuvB. An RuvB hexamer assembles on each DNA strand where it exits the tetramer. Each RuvB hexamer is contacted by two RuvA subunits (via domain III) on 2 adjacent RuvB subunits; this complex drives branch migration. In the full resolvosome a probable DNA-RuvA(4)-RuvB(12)-RuvC(2) complex forms which resolves the HJ.

It localises to the cytoplasm. The RuvA-RuvB-RuvC complex processes Holliday junction (HJ) DNA during genetic recombination and DNA repair, while the RuvA-RuvB complex plays an important role in the rescue of blocked DNA replication forks via replication fork reversal (RFR). RuvA specifically binds to HJ cruciform DNA, conferring on it an open structure. The RuvB hexamer acts as an ATP-dependent pump, pulling dsDNA into and through the RuvAB complex. HJ branch migration allows RuvC to scan DNA until it finds its consensus sequence, where it cleaves and resolves the cruciform DNA. This Enterobacter sp. (strain 638) protein is Holliday junction branch migration complex subunit RuvA.